The sequence spans 504 residues: Anaerobic nitric oxide reductase transcription regulator NorR (504 aa).

Asp-57 bears the 4-aspartylphosphate mark. The Sigma-54 factor interaction domain maps to Met-187–Val-416. Residues Gly-215–Glu-222 and Ala-278–Glu-287 each bind ATP. The H-T-H motif DNA-binding region spans Trp-479–Lys-498.

The protein operates within nitrogen metabolism; nitric oxide reduction. Functionally, required for the expression of anaerobic nitric oxide (NO) reductase, acts as a transcriptional activator for at least the norVW operon. Activation also requires sigma-54. The protein is Anaerobic nitric oxide reductase transcription regulator NorR of Shigella flexneri serotype 5b (strain 8401).